A 207-amino-acid chain; its full sequence is Small ribosomal subunit protein uS4 (207 aa).

Residues serine 29–proline 38 show a composition bias toward basic and acidic residues. A disordered region spans residues serine 29–leucine 54. Residues glycine 42–tyrosine 52 are compositionally biased toward polar residues. An S4 RNA-binding domain is found at serine 97–leucine 160.

Belongs to the universal ribosomal protein uS4 family. As to quaternary structure, part of the 30S ribosomal subunit. Contacts protein S5. The interaction surface between S4 and S5 is involved in control of translational fidelity.

In terms of biological role, one of the primary rRNA binding proteins, it binds directly to 16S rRNA where it nucleates assembly of the body of the 30S subunit. Functionally, with S5 and S12 plays an important role in translational accuracy. The polypeptide is Small ribosomal subunit protein uS4 (Polaromonas naphthalenivorans (strain CJ2)).